The following is a 163-amino-acid chain: Large ribosomal subunit protein uL22c (163 aa).

It belongs to the universal ribosomal protein uL22 family. In terms of assembly, part of the 50S ribosomal subunit.

It is found in the plastid. Its subcellular location is the chloroplast. This protein binds specifically to 23S rRNA. In terms of biological role, the globular domain of the protein is located near the polypeptide exit tunnel on the outside of the subunit, while an extended beta-hairpin is found that lines the wall of the exit tunnel in the center of the 70S ribosome. The polypeptide is Large ribosomal subunit protein uL22c (rpl22) (Lobularia maritima (Sweet alyssum)).